A 298-amino-acid chain; its full sequence is Tyrosine recombinase XerC (298 aa).

The Core-binding (CB) domain occupies 2-88; sequence TDLHTDVERY…ALRSFFDWLV (87 aa). In terms of domain architecture, Tyr recombinase spans 109–288; it reads HLPKNIDVDD…DFQHLASVYD (180 aa). Catalysis depends on residues Arg148, Lys172, His240, Arg243, and His266. Residue Tyr275 is the O-(3'-phospho-DNA)-tyrosine intermediate of the active site.

The protein belongs to the 'phage' integrase family. XerC subfamily. In terms of assembly, forms a cyclic heterotetrameric complex composed of two molecules of XerC and two molecules of XerD, in which XerC interacts with XerD via its C-terminal region, XerD interacts with XerC via its C-terminal region and so on.

The protein localises to the cytoplasm. Its activity is regulated as follows. FtsK may regulate the catalytic switch between XerC and XerD in the heterotetrameric complex during the two steps of the recombination process. Functionally, site-specific tyrosine recombinase, which acts by catalyzing the cutting and rejoining of the recombining DNA molecules. Binds cooperatively to specific DNA consensus sequences that are separated from XerD binding sites by a short central region, forming the heterotetrameric XerC-XerD complex that recombines DNA substrates. The complex is essential to convert dimers of the bacterial chromosome into monomers to permit their segregation at cell division. It also contributes to the segregational stability of plasmids. In the complex XerC specifically exchanges the top DNA strands. This is Tyrosine recombinase XerC from Escherichia coli O127:H6 (strain E2348/69 / EPEC).